Consider the following 465-residue polypeptide: Sorting nexin-8 (465 aa).

Low complexity predominate over residues 1 to 19 (MTGRAMDPLPAAAVGAAAE). Residues 1–36 (MTGRAMDPLPAAAVGAAAEAEADEEADPPASDLPTP) form a disordered region. Positions 73-181 (ARDTVQVELI…KLFLSFSGSD (109 aa)) constitute a PX domain. A 1,2-diacyl-sn-glycero-3-phospho-(1D-myo-inositol-3-phosphate)-binding residues include Arg109, Lys135, and Arg148. Thr452 is subject to Phosphothreonine. Phosphoserine is present on Ser456.

This sequence belongs to the sorting nexin family.

It localises to the early endosome membrane. In terms of biological role, may be involved in several stages of intracellular trafficking. May play a role in intracellular protein transport from early endosomes to the trans-Golgi network. The protein is Sorting nexin-8 (SNX8) of Homo sapiens (Human).